A 324-amino-acid polypeptide reads, in one-letter code: Putative 12-oxophytodienoate reductase-like protein 1 (324 aa).

Position 1 is an N-acetylmethionine (Met-1). Residues 14–16 (PMA), Ala-47, and Gln-89 each bind FMN. A compositionally biased stretch (polar residues) spans 99–113 (QDCQPNGESPVSSTD). Residues 99–128 (QDCQPNGESPVSSTDKPFADDPSNEFTPPR) are disordered. 160-163 (HGAH) is a binding site for substrate. Tyr-165 (proton donor) is an active-site residue. Arg-212 is an FMN binding site. Arg-252 contacts substrate. FMN contacts are provided by residues Gly-282 and 303-304 (GR).

Belongs to the NADH:flavin oxidoreductase/NADH oxidase family. Requires FMN as cofactor.

Its function is as follows. Putative oxophytodienoate reductase that may be involved in the biosynthesis or metabolism of oxylipin signaling molecules. This Arabidopsis thaliana (Mouse-ear cress) protein is Putative 12-oxophytodienoate reductase-like protein 1.